The primary structure comprises 537 residues: Glutamyl-tRNA reductase, chloroplastic (537 aa).

Residues 1-48 (MMASTTSATAAGGAFAAAKTRAGSSAAGGGACARVAAGGRRRSGVVVR) constitute a chloroplast transit peptide. Substrate contacts are provided by residues 134–137 (TCNR), Ser194, 199–201 (EGQ), and Gln205. Cys135 functions as the Nucleophile in the catalytic mechanism. 276–281 (GAGKMG) is a binding site for NADP(+).

It belongs to the glutamyl-tRNA reductase family.

Its subcellular location is the plastid. It is found in the chloroplast. It catalyses the reaction (S)-4-amino-5-oxopentanoate + tRNA(Glu) + NADP(+) = L-glutamyl-tRNA(Glu) + NADPH + H(+). Its pathway is porphyrin-containing compound metabolism; protoporphyrin-IX biosynthesis; 5-aminolevulinate from L-glutamyl-tRNA(Glu): step 1/2. In terms of biological role, catalyzes the NADPH-dependent reduction of glutamyl-tRNA(Glu) to glutamate 1-semialdehyde (GSA). The protein is Glutamyl-tRNA reductase, chloroplastic of Oryza sativa subsp. indica (Rice).